The sequence spans 465 residues: Tubulin gamma chain (465 aa).

144-150 (AGGTGSG) is a binding site for GTP.

The protein belongs to the tubulin family.

It is found in the cytoplasm. Its subcellular location is the cytoskeleton. The protein localises to the microtubule organizing center. The protein resides in the spindle pole body. In terms of biological role, tubulin is the major constituent of microtubules. The gamma chain is found at microtubule organizing centers (MTOC) such as the spindle poles or the centrosome, suggesting that it is involved in the minus-end nucleation of microtubule assembly. This chain is Tubulin gamma chain (TUB4), found in Candida glabrata (strain ATCC 2001 / BCRC 20586 / JCM 3761 / NBRC 0622 / NRRL Y-65 / CBS 138) (Yeast).